A 1193-amino-acid polypeptide reads, in one-letter code: DNA polymerase (1193 aa).

Residues 1–88 form a disordered region; the sequence is MALVQTHGSR…PAKKKRGTVV (88 aa). Low complexity predominate over residues 48-68; the sequence is PATTASGSRAAPTARRASSPP.

This sequence belongs to the DNA polymerase type-B family. Heterodimer with the terminal protein; this heterodimer binds to bp 9 to 18 of the genome. Forms a complex with viral pTP, DBP and hosts NFIA and POU2F1/OCT1 for initiation of replication.

It localises to the host nucleus. The enzyme catalyses DNA(n) + a 2'-deoxyribonucleoside 5'-triphosphate = DNA(n+1) + diphosphate. Its function is as follows. Eukaryotic-type DNA polymerase involved in viral genomic replication. DNA synthesis is protein primed, and acts in a strand displacement replication. Assembles in complex with viral pTP, DBP, host NFIA and host POU2F1/OCT1 on viral origin of replication. The polymerase covalently transfers dCMP onto pTP, thereby initiating complementary strand synthesis. The sequence is that of DNA polymerase from Homo sapiens (Human).